Consider the following 213-residue polypeptide: Ribosomal RNA small subunit methyltransferase G (213 aa).

S-adenosyl-L-methionine is bound by residues Gly75, Phe80, 128-129 (IE), and Arg144.

The protein belongs to the methyltransferase superfamily. RNA methyltransferase RsmG family.

The protein resides in the cytoplasm. The catalysed reaction is guanosine(527) in 16S rRNA + S-adenosyl-L-methionine = N(7)-methylguanosine(527) in 16S rRNA + S-adenosyl-L-homocysteine. In terms of biological role, specifically methylates the N7 position of guanine in position 527 of 16S rRNA. This is Ribosomal RNA small subunit methyltransferase G from Brucella abortus (strain S19).